The primary structure comprises 302 residues: Syntaxin-17 (302 aa).

N-acetylserine is present on S2. At 2 to 228 the chain is on the cytoplasmic side; that stretch reads SEDEEKVKLR…KNLGKAAKYK (227 aa). K41 carries the N6-acetyllysine modification. The stretch at 53–123 forms a coiled coil; it reads EEHINAGRTV…EELKKQFNDE (71 aa). Y157 is subject to Phosphotyrosine; by ABL1. The t-SNARE coiled-coil homology domain maps to 162–224; it reads IPQDQNAAES…EEGTKNLGKA (63 aa). Residues 229–249 form a helical membrane-spanning segment; that stretch reads LAALPVAGALIGGMVGGPIGL. A necessary and sufficient for localization to autophagosome region spans residues 229–275; the sequence is LAALPVAGALIGGMVGGPIGLLAGFKVAGIAAALGGGVLGFTGGKLI. Over 250 to 254 the chain is Lumenal; that stretch reads LAGFK. A helical membrane pass occupies residues 255–275; the sequence is VAGIAAALGGGVLGFTGGKLI. At 276–302 the chain is on the cytoplasmic side; the sequence is QRKKQKMMEKLTSSCPDLPSQTDKKCS. The residue at position 289 (S289) is a Phosphoserine. The Endoplasmic reticulum retention signal signature appears at 299–302; it reads KKCS.

It belongs to the syntaxin family. Forms a SNARE complex composed of VAMP8, SNAP29 and STX17 involved in fusion of autophagosome with lysosome. Interacts with VAMP7 and VTI1B. Probably interacts with BET1, SCFD1 and SEC22B. Interacts with PTPN2 and ABL1; involved in STX17 phosphorylation. Interacts with COPB1. Interacts with TMED9 and TMED10; the interaction is direct. Interacts with ATG14. Interacts with RUBCNL/PACER; promoting targeting of RUBCNL/PACER to autophagosome. Interacts with VAMP8, SNAP29, VPS39 and VPS41; these interactions are increased in the absence of TMEM39A. Interacts with IRGM; promoting STX17 recruitment to autophagosomes. Interacts with ATG8 proteins GABARAP and MAP1LC3B. Interacts with RNF115; this interaction enhances STX17 stability which in turn promotes autophagosome maturation. Interacts with RAB39A (GTP-bound); the interaction promotes autophagosome-lysosome membrane fusion driven by STX17-SNAP29-VAMP8. Interacts with RAB39B; the interaction may promote a different fonction in autophagy as compared with RAB39A. In terms of assembly, (Microbial infection) The interactions with VAMP8, SNAP29 and VPS41 are decreased in presence of SARS coronavirus-2/SARS-CoV-2 ORF3A protein. Phosphorylated at Tyr-157 probably by ABL1. Dephosphorylation by PTPN2; regulates exit from the endoplasmic reticulum. In terms of processing, (Microbial infection) Cleaved by the L.pneumophila serine protease Lpg1137, impairing endoplasmic reticulum-mitochondria communication, leading to inhibit autophagy.

It is found in the endoplasmic reticulum membrane. It localises to the smooth endoplasmic reticulum membrane. The protein localises to the endoplasmic reticulum-Golgi intermediate compartment membrane. Its subcellular location is the cytoplasmic vesicle. The protein resides in the autophagosome membrane. It is found in the COPII-coated vesicle membrane. It localises to the cytoplasm. The protein localises to the cytosol. Its subcellular location is the mitochondrion membrane. The protein resides in the autolysosome membrane. SNAREs, soluble N-ethylmaleimide-sensitive factor-attachment protein receptors, are essential proteins for fusion of cellular membranes. SNAREs localized on opposing membranes assemble to form a trans-SNARE complex, an extended, parallel four alpha-helical bundle that drives membrane fusion. STX17 is a SNARE of the autophagosome involved in autophagy through the direct control of autophagosome membrane fusion with the lysosome membrane. May also play a role in the early secretory pathway where it may maintain the architecture of the endoplasmic reticulum-Golgi intermediate compartment/ERGIC and Golgi and/or regulate transport between the endoplasmic reticulum, the ERGIC and the Golgi. The polypeptide is Syntaxin-17 (Homo sapiens (Human)).